Reading from the N-terminus, the 156-residue chain is Small ribosomal subunit protein uS7 (156 aa).

This sequence belongs to the universal ribosomal protein uS7 family. As to quaternary structure, part of the 30S ribosomal subunit. Contacts proteins S9 and S11.

In terms of biological role, one of the primary rRNA binding proteins, it binds directly to 16S rRNA where it nucleates assembly of the head domain of the 30S subunit. Is located at the subunit interface close to the decoding center, probably blocks exit of the E-site tRNA. The protein is Small ribosomal subunit protein uS7 of Geobacillus thermodenitrificans (strain NG80-2).